The following is a 1715-amino-acid chain: Neurexin-2 (1715 aa).

The signal sequence occupies residues methionine 1–leucine 29. One can recognise a Laminin G-like 1 domain in the interval glutamate 30–cysteine 206. At glutamate 30–threonine 1639 the chain is on the extracellular side. The N-linked (GlcNAc...) asparagine glycan is linked to asparagine 60. The 41-residue stretch at alanine 202 to serine 242 folds into the EGF-like 1 domain. 3 disulfide bridges follow: cysteine 206–cysteine 219, cysteine 213–cysteine 229, and cysteine 231–cysteine 241. 2 consecutive Laminin G-like domains span residues valine 289–cysteine 486 and aspartate 493–cysteine 686. Aspartate 335 contacts Ca(2+). N-linked (GlcNAc...) asparagine glycosylation is present at asparagine 338. Ca(2+)-binding residues include leucine 352 and methionine 420. 5 disulfides stabilise this stretch: cysteine 450-cysteine 486, cysteine 657-cysteine 686, cysteine 694-cysteine 705, cysteine 699-cysteine 714, and cysteine 716-cysteine 726. The EGF-like 2 domain occupies threonine 690 to glutamate 727. 2 Laminin G-like domains span residues valine 732–cysteine 907 and aspartate 921–cysteine 1096. Ca(2+) is bound by residues aspartate 779 and leucine 796. Residue asparagine 844 is glycosylated (N-linked (GlcNAc...) asparagine). Arginine 857 lines the Ca(2+) pocket. Intrachain disulfides connect cysteine 1068-cysteine 1096, cysteine 1103-cysteine 1114, cysteine 1108-cysteine 1123, and cysteine 1125-cysteine 1135. The region spanning proline 1099–asparagine 1136 is the EGF-like 3 domain. In terms of domain architecture, Laminin G-like 6 spans threonine 1140 to serine 1348. The Ca(2+) site is built by aspartate 1192 and valine 1209. The N-linked (GlcNAc...) asparagine glycan is linked to asparagine 1239. Positions 1291 and 1293 each coordinate Ca(2+). Serine 1403 is a glycosylation site (O-linked (Xyl...) (heparan sulfate) serine). Disordered stretches follow at residues alanine 1461 to threonine 1511, leucine 1529 to alanine 1549, and leucine 1583 to proline 1626. The chain crosses the membrane as a helical span at residues glycine 1640–methionine 1660. Residues tyrosine 1661–valine 1715 are Cytoplasmic-facing. The tract at residues asparagine 1682–valine 1715 is disordered.

It belongs to the neurexin family. In terms of assembly, the laminin G-like domain 1 binds to NXPH1. Interacts with PATJ. Interacts with CBLN1, CBLN2 and, less avidly, with CBLN4. Specific isoforms bind neuroligins NLGN1, NLGN2 and NLGN3. Isoform 5c/alpha-2C binds to alpha-dystroglycan. Interacts (via Laminin G-like 1 domain) with IGSF21 (Ig-like 1 domain) in a trans-interaction manner. Interacts with CLSTN3. Post-translationally, O-glycosylated; contains heparan sulfate. Heparan sulfate attachment is required for synapse development by mediating interactions with neuroligins. As to expression, brain (neuronal synapse).

It is found in the presynaptic cell membrane. Functionally, neuronal cell surface protein that may be involved in cell recognition and cell adhesion. May mediate intracellular signaling. The polypeptide is Neurexin-2 (Nrxn2) (Rattus norvegicus (Rat)).